A 196-amino-acid polypeptide reads, in one-letter code: Peptidyl-tRNA hydrolase (196 aa).

Tyr17 is a tRNA binding site. His22 acts as the Proton acceptor in catalysis. Residues Phe68, Asn70, and Asn116 each coordinate tRNA.

The protein belongs to the PTH family. In terms of assembly, monomer.

The protein resides in the cytoplasm. It carries out the reaction an N-acyl-L-alpha-aminoacyl-tRNA + H2O = an N-acyl-L-amino acid + a tRNA + H(+). In terms of biological role, hydrolyzes ribosome-free peptidyl-tRNAs (with 1 or more amino acids incorporated), which drop off the ribosome during protein synthesis, or as a result of ribosome stalling. Functionally, catalyzes the release of premature peptidyl moieties from peptidyl-tRNA molecules trapped in stalled 50S ribosomal subunits, and thus maintains levels of free tRNAs and 50S ribosomes. The chain is Peptidyl-tRNA hydrolase from Yersinia pestis bv. Antiqua (strain Antiqua).